Consider the following 353-residue polypeptide: MKKIILTGGGSAGHVTPNLALIPKLKELGYEIQYIGTESGIEREIIENEKIKYHVISSGKLRRYFDIKNFTDPFKVIKGIFQAIFIMRKEKPNVVFSKGGFVSVPVVFAAYINGIPVIAHESDITPGLANRLSSPYCTKVCVTFPESVKSIKGDNAVLTGTPIRQELLDGSRIIGRRMCGFQNDKPVLLIIGGSLGSKFINNTVRNCLNELLKIYNIIHICGKGNLEEKLTERNGYVQFEYVSEEMPHIMNAADIVISRAGANVIFELLALKKPNLLIPLSRKSSRGDQILNAASFEKSGYSMVLKEEDMTPKLLLDKLKKLDMSKHTYINKMKASAVQDATNKIINLIEKYK.

UDP-N-acetyl-alpha-D-glucosamine contacts are provided by residues 11–13, Arg-164, Ser-194, and Gln-289; that span reads SAG.

It belongs to the glycosyltransferase 28 family. MurG subfamily.

The protein resides in the cell membrane. The enzyme catalyses di-trans,octa-cis-undecaprenyl diphospho-N-acetyl-alpha-D-muramoyl-L-alanyl-D-glutamyl-meso-2,6-diaminopimeloyl-D-alanyl-D-alanine + UDP-N-acetyl-alpha-D-glucosamine = di-trans,octa-cis-undecaprenyl diphospho-[N-acetyl-alpha-D-glucosaminyl-(1-&gt;4)]-N-acetyl-alpha-D-muramoyl-L-alanyl-D-glutamyl-meso-2,6-diaminopimeloyl-D-alanyl-D-alanine + UDP + H(+). Its pathway is cell wall biogenesis; peptidoglycan biosynthesis. Its function is as follows. Cell wall formation. Catalyzes the transfer of a GlcNAc subunit on undecaprenyl-pyrophosphoryl-MurNAc-pentapeptide (lipid intermediate I) to form undecaprenyl-pyrophosphoryl-MurNAc-(pentapeptide)GlcNAc (lipid intermediate II). This chain is UDP-N-acetylglucosamine--N-acetylmuramyl-(pentapeptide) pyrophosphoryl-undecaprenol N-acetylglucosamine transferase, found in Clostridium kluyveri (strain ATCC 8527 / DSM 555 / NBRC 12016 / NCIMB 10680 / K1).